Here is a 100-residue protein sequence, read N- to C-terminus: Small ribosomal subunit protein bS20 (100 aa).

The segment at 79 to 100 (AAHQKSRLSAAVKQAIEPAPST) is disordered.

It belongs to the bacterial ribosomal protein bS20 family.

Functionally, binds directly to 16S ribosomal RNA. This Prochlorococcus marinus (strain MIT 9303) protein is Small ribosomal subunit protein bS20.